The sequence spans 246 residues: Dihydromethanopterin reductase (acceptor) (246 aa).

4Fe-4S ferredoxin-type domains are found at residues 150–178 (LPYA…VKRD) and 179–208 (NFVE…EGKE). [4Fe-4S] cluster is bound by residues cysteine 159, cysteine 162, cysteine 165, cysteine 169, cysteine 188, cysteine 191, cysteine 194, and cysteine 198.

Homodimer. Requires [4Fe-4S] cluster as cofactor.

The catalysed reaction is 5,6,7,8-tetrahydromethanopterin + A = 7,8-dihydromethanopterin + AH2. It participates in cofactor biosynthesis; 5,6,7,8-tetrahydromethanopterin biosynthesis. Functionally, involved in the biosynthesis of tetrahydromethanopterin, a coenzyme used in methanogenesis. Catalyzes the reduction of dihydromethanopterin (H(2)MPT) to tetrahydromethanopterin (H(4)MPT). Ferredoxin may serve as an electron donor. The protein is Dihydromethanopterin reductase (acceptor) of Methanocaldococcus jannaschii (strain ATCC 43067 / DSM 2661 / JAL-1 / JCM 10045 / NBRC 100440) (Methanococcus jannaschii).